The following is a 460-amino-acid chain: tRNA modification GTPase MnmE (460 aa).

Positions 22, 83, and 122 each coordinate (6S)-5-formyl-5,6,7,8-tetrahydrofolate. One can recognise a TrmE-type G domain in the interval 219-381 (GIKTLIIGRP…LQQTILKKFQ (163 aa)). Asparagine 229 contributes to the K(+) binding site. Residues 229 to 234 (NVGKSS), 248 to 254 (SDISGTT), and 273 to 276 (DTAG) contribute to the GTP site. Mg(2+) is bound at residue serine 233. Residues serine 248, isoleucine 250, and threonine 253 each contribute to the K(+) site. Position 254 (threonine 254) interacts with Mg(2+). Residue lysine 460 coordinates (6S)-5-formyl-5,6,7,8-tetrahydrofolate.

Belongs to the TRAFAC class TrmE-Era-EngA-EngB-Septin-like GTPase superfamily. TrmE GTPase family. As to quaternary structure, homodimer. Heterotetramer of two MnmE and two MnmG subunits. It depends on K(+) as a cofactor.

The protein localises to the cytoplasm. In terms of biological role, exhibits a very high intrinsic GTPase hydrolysis rate. Involved in the addition of a carboxymethylaminomethyl (cmnm) group at the wobble position (U34) of certain tRNAs, forming tRNA-cmnm(5)s(2)U34. This is tRNA modification GTPase MnmE from Aster yellows witches'-broom phytoplasma (strain AYWB).